We begin with the raw amino-acid sequence, 110 residues long: Large ribosomal subunit protein uL22 (110 aa).

Belongs to the universal ribosomal protein uL22 family. In terms of assembly, part of the 50S ribosomal subunit.

This protein binds specifically to 23S rRNA; its binding is stimulated by other ribosomal proteins, e.g. L4, L17, and L20. It is important during the early stages of 50S assembly. It makes multiple contacts with different domains of the 23S rRNA in the assembled 50S subunit and ribosome. Its function is as follows. The globular domain of the protein is located near the polypeptide exit tunnel on the outside of the subunit, while an extended beta-hairpin is found that lines the wall of the exit tunnel in the center of the 70S ribosome. The sequence is that of Large ribosomal subunit protein uL22 from Idiomarina loihiensis (strain ATCC BAA-735 / DSM 15497 / L2-TR).